Here is a 327-residue protein sequence, read N- to C-terminus: Glutamyl endopeptidase (327 aa).

Positions 1–29 (MKGKFLKVSSLFVATLTTATLVSSPAANA) are cleaved as a signal peptide. Residues 30 to 68 (LSSKAMDNHPQQSQSSKQQTPKIQKGGNLKPLEQREHAN) constitute a propeptide that is removed on maturation. The interval 33–61 (KAMDNHPQQSQSSKQQTPKIQKGGNLKPL) is disordered. A compositionally biased stretch (low complexity) spans 40–54 (QQSQSSKQQTPKIQK). Catalysis depends on charge relay system residues H119, D161, and S237. The disordered stretch occupies residues 283–327 (FANDDQPNNPDNPDNPNNPDNPNNPNNPDNPDNGDNNNSDNPDAA). Low complexity predominate over residues 286–327 (DDQPNNPDNPDNPNNPDNPNNPNNPDNPDNGDNNNSDNPDAA). A run of 9 repeats spans residues 289-291 (PNN), 292-294 (PDN), 295-297 (PDN), 298-300 (PNN), 301-303 (PDN), 304-306 (PNN), 307-309 (PNN), 310-312 (PDN), and 313-315 (PDN). The 9 X 3 AA repeats of P-[DN]-N stretch occupies residues 289–315 (PNNPDNPDNPNNPDNPNNPNNPDNPDN).

The protein belongs to the peptidase S1B family. In terms of processing, proteolytically cleaved by aureolysin (aur). This cleavage leads to the activation of SspA.

It localises to the secreted. The catalysed reaction is Preferential cleavage: Glu-|-Xaa, Asp-|-Xaa.. Its function is as follows. Preferentially cleaves peptide bonds on the carboxyl-terminal side of aspartate and glutamate. Along with other extracellular proteases it is involved in colonization and infection of human tissues. Required for proteolytic maturation of thiol protease SspB and inactivation of SspC, an inhibitor of SspB. It is the most important protease for degradation of fibronectin-binding protein (FnBP) and surface protein A, which are involved in adherence to host cells. May also protect bacteria against host defense mechanism by cleaving the immunoglobulin classes IgG, IgA and IgM. May be involved in the stability of secreted lipases. In Staphylococcus aureus (strain MW2), this protein is Glutamyl endopeptidase (sspA).